The following is a 266-amino-acid chain: Eukaryotic translation initiation factor 3 subunit J (266 aa).

2 disordered regions span residues 1–111 (MAPS…EKDA) and 217–266 (NEKM…DDFM). The span at 26–44 (DEEEEDVLDSWDAAEDSEV) shows a compositional bias: acidic residues. The stretch at 40-82 (EDSEVEREKAAKAAEAKAKAEAEAAANKKSKAQRIQEKKAQRK) forms a coiled coil. Composition is skewed to basic and acidic residues over residues 45 to 61 (EREK…KAEA) and 73 to 85 (RIQE…KADA). A compositionally biased stretch (acidic residues) spans 86–97 (DAEDSDDSDEDE). Basic and acidic residues-rich tracts occupy residues 98–111 (AERR…EKDA) and 218–230 (EKMK…DKGN). Residues 254–266 (SYDDDGLDDDDFM) show a composition bias toward acidic residues.

Belongs to the eIF-3 subunit J family. As to quaternary structure, component of the eukaryotic translation initiation factor 3 (eIF-3) complex.

It is found in the cytoplasm. Component of the eukaryotic translation initiation factor 3 (eIF-3) complex, which is involved in protein synthesis of a specialized repertoire of mRNAs and, together with other initiation factors, stimulates binding of mRNA and methionyl-tRNAi to the 40S ribosome. The eIF-3 complex specifically targets and initiates translation of a subset of mRNAs involved in cell proliferation. This is Eukaryotic translation initiation factor 3 subunit J (hcr1) from Aspergillus niger (strain ATCC MYA-4892 / CBS 513.88 / FGSC A1513).